We begin with the raw amino-acid sequence, 213 residues long: Non-structural protein NP-1 (213 aa).

A disordered region spans residues 1–80 (MERSRSPRET…ATRKETATKK (80 aa)). 2 stretches are compositionally biased toward basic and acidic residues: residues 15 to 33 (SRDKSDADWSERRREERTR) and 43 to 58 (AHGERSWGSWRSREKN).

Belongs to the Bocaparvovirus Non-structural protein NP-1 family.

The protein resides in the host nucleus. Functionally, required for the expression of the capsid proteins. Performs the splicing and internal polyadenylation of the viral capsid-encoding mRNA precursor, which allows its maturation and expression. Transactivates the viral promoter. This Bos taurus (Bovine) protein is Non-structural protein NP-1 (NP1).